We begin with the raw amino-acid sequence, 348 residues long: Spore development regulator vosA (348 aa).

The Velvet domain maps to 46 to 244 (ALSPSSCFLS…SDQGVRLRLR (199 aa)). The tract at residues 250–294 (MMSNKRSISGSGDLTSDQSQQQQQQQPLAKKRREDSVESANPSSL) is disordered. Over residues 253 to 266 (NKRSISGSGDLTSD) the composition is skewed to polar residues. The Nuclear localization signal signature appears at 274-280 (QQPLAKK).

The protein belongs to the velvet family. VosA subfamily. As to quaternary structure, forms a heterodimeric complex with VEL2; the formation of the VEL2-VOS1 complex is light-dependent.

The protein localises to the nucleus. In terms of biological role, component of the velB-VosA heterodimeric complex that plays a dual role in activating genes associated with spore maturation and repressing certain development-associated genes. The complex binds DNA through the DNA-binding domain of vosA that recognizes an 11-nucleotide consensus sequence 5'-CTGGCCGCGGC-3' consisting of two motifs in the promoters of key developmental regulatory genes. Regulates spore viability, trehalose accumulation, and tolerance to thermal and oxidative as well as ion stresses. Positively regulates conidial pigmentation and pathogenicity on barley. This is Spore development regulator vosA from Cochliobolus sativus (strain ND90Pr / ATCC 201652) (Common root rot and spot blotch fungus).